A 77-amino-acid polypeptide reads, in one-letter code: Cell division topological specificity factor (77 aa).

The protein belongs to the MinE family.

Its function is as follows. Prevents the cell division inhibition by proteins MinC and MinD at internal division sites while permitting inhibition at polar sites. This ensures cell division at the proper site by restricting the formation of a division septum at the midpoint of the long axis of the cell. In Helicobacter pylori (strain Shi470), this protein is Cell division topological specificity factor.